Reading from the N-terminus, the 393-residue chain is Dual-specificity RNA methyltransferase RlmN (393 aa).

The active-site Proton acceptor is the Glu114. In terms of domain architecture, Radical SAM core spans 120–359 (EGDRATLCVS…VIVRKTRGDD (240 aa)). The cysteines at positions 127 and 364 are disulfide-linked. Positions 134, 138, and 141 each coordinate [4Fe-4S] cluster. S-adenosyl-L-methionine-binding positions include 188 to 189 (GE), Ser220, 242 to 244 (SLH), and Asn321. Catalysis depends on Cys364, which acts as the S-methylcysteine intermediate.

Belongs to the radical SAM superfamily. RlmN family. The cofactor is [4Fe-4S] cluster.

Its subcellular location is the cytoplasm. The catalysed reaction is adenosine(2503) in 23S rRNA + 2 reduced [2Fe-2S]-[ferredoxin] + 2 S-adenosyl-L-methionine = 2-methyladenosine(2503) in 23S rRNA + 5'-deoxyadenosine + L-methionine + 2 oxidized [2Fe-2S]-[ferredoxin] + S-adenosyl-L-homocysteine. It catalyses the reaction adenosine(37) in tRNA + 2 reduced [2Fe-2S]-[ferredoxin] + 2 S-adenosyl-L-methionine = 2-methyladenosine(37) in tRNA + 5'-deoxyadenosine + L-methionine + 2 oxidized [2Fe-2S]-[ferredoxin] + S-adenosyl-L-homocysteine. In terms of biological role, specifically methylates position 2 of adenine 2503 in 23S rRNA and position 2 of adenine 37 in tRNAs. m2A2503 modification seems to play a crucial role in the proofreading step occurring at the peptidyl transferase center and thus would serve to optimize ribosomal fidelity. The chain is Dual-specificity RNA methyltransferase RlmN from Haemophilus ducreyi (strain 35000HP / ATCC 700724).